We begin with the raw amino-acid sequence, 642 residues long: Putative ATP-binding protein YdiF (642 aa).

2 ABC transporter domains span residues 4–259 (LQVN…EKDL) and 327–541 (LRVQ…ELEK). Residues 36–43 (GRNGAGKS) and 360–367 (GPNGIGKS) each bind ATP. Basic and acidic residues-rich tracts occupy residues 541–550 (KMNQQEETDK) and 557–567 (SDSKRSYEEEK). The segment at 541–567 (KMNQQEETDKTPATVKSDSKRSYEEEK) is disordered.

This sequence belongs to the ABC transporter superfamily. ABCF family. YdiF subfamily.

The chain is Putative ATP-binding protein YdiF (ydiF) from Bacillus subtilis (strain 168).